A 201-amino-acid chain; its full sequence is MYVGRFVTIGKTNGRLWAGYRVSSRSFPNRYAVKLGDDKVAIMPKDVKDLEKSPYISYNCIRVLPSVAVVTNGSHTDAIVEKIEMGYPIRDALALSLLAMDYEKDSLDTPRIAAVVSRHVAYLGIVTKDGLNVSTFPMGDNECLMVATYEKTMFSRLTVDASSAEEVARKMYDLTFEKPVCAAGAYQVDDHFELGVYNGPQ.

It belongs to the archaeal IMP cyclohydrolase family.

The enzyme catalyses IMP + H2O = 5-formamido-1-(5-phospho-D-ribosyl)imidazole-4-carboxamide. It participates in purine metabolism; IMP biosynthesis via de novo pathway; IMP from 5-formamido-1-(5-phospho-D-ribosyl)imidazole-4-carboxamide: step 1/1. In terms of biological role, catalyzes the cyclization of 5-formylamidoimidazole-4-carboxamide ribonucleotide to IMP. This Methanocella arvoryzae (strain DSM 22066 / NBRC 105507 / MRE50) protein is IMP cyclohydrolase.